Consider the following 352-residue polypeptide: N-terminal EF-hand calcium-binding protein 1 (352 aa).

At S4 the chain carries Phosphoserine. EF-hand domains lie at 26-61 (KGMSIFLDILRRADKNDDGKLSFEEFKAYFADGVLS) and 60-95 (LSGEELHELFHTIDTHNTNNLDTEELCEYFSQHLGE). Residues D39, N41, D43, K45, and E50 each contribute to the Ca(2+) site. The stretch at 135–163 (LLKETLNQLQSLQNSLECAMETTEEQTRQ) forms a coiled coil. The interval 155–202 (ETTEEQTRQERQGPSKPEVLSIQWPGKRSSRRVQRHNSFSPNSPQFNV) is disordered. A compositionally biased stretch (polar residues) spans 190–202 (HNSFSPNSPQFNV). Residues S192 and S197 each carry the phosphoserine modification. The stretch at 209 to 275 (EEDNQWMTQI…EEFQLALKHY (67 aa)) forms a coiled coil. Residues 252–340 (MLVQRQMSVT…LETPELTSTM (89 aa)) enclose the ABM domain.

Interacts with STX1. May interact with CPNE6.

It localises to the cytoplasm. This chain is N-terminal EF-hand calcium-binding protein 1 (Necab1), found in Rattus norvegicus (Rat).